We begin with the raw amino-acid sequence, 170 residues long: Lipoprotein signal peptidase (170 aa).

A run of 4 helical transmembrane segments spans residues 11-31 (LSWL…KFYF), 41-61 (IVVI…AAFS), 69-89 (WQRW…VVWL), and 95-115 (NETW…GNLY). Catalysis depends on residues aspartate 125 and aspartate 144. A helical membrane pass occupies residues 136 to 156 (YFPAFNFADSAITVGAVMLAL).

The protein belongs to the peptidase A8 family.

The protein localises to the cell inner membrane. The enzyme catalyses Release of signal peptides from bacterial membrane prolipoproteins. Hydrolyzes -Xaa-Yaa-Zaa-|-(S,diacylglyceryl)Cys-, in which Xaa is hydrophobic (preferably Leu), and Yaa (Ala or Ser) and Zaa (Gly or Ala) have small, neutral side chains.. Its pathway is protein modification; lipoprotein biosynthesis (signal peptide cleavage). Its function is as follows. This protein specifically catalyzes the removal of signal peptides from prolipoproteins. The chain is Lipoprotein signal peptidase from Pseudomonas fluorescens (strain Pf0-1).